The chain runs to 136 residues: NADH-ubiquinone oxidoreductase chain 2 (136 aa).

The next 4 membrane-spanning stretches (helical) occupy residues 12-32, 34-54, 74-94, and 99-119; these read YFLIQSVASVIFLASILNQSF, FLIPFALLIKIGAAPFHMWLV, IGPLLGLAMLSSVSHLSWLMV, and FLLMLVYYVTYLAILYFAVIL.

This sequence belongs to the complex I subunit 2 family.

The protein resides in the mitochondrion inner membrane. The enzyme catalyses a ubiquinone + NADH + 5 H(+)(in) = a ubiquinol + NAD(+) + 4 H(+)(out). Functionally, core subunit of the mitochondrial membrane respiratory chain NADH dehydrogenase (Complex I) that is believed to belong to the minimal assembly required for catalysis. Complex I functions in the transfer of electrons from NADH to the respiratory chain. The immediate electron acceptor for the enzyme is believed to be ubiquinone. This chain is NADH-ubiquinone oxidoreductase chain 2 (ND2), found in Artemia salina (Brine shrimp).